The sequence spans 234 residues: Kappa-casein (234 aa).

The first 21 residues, 1 to 21 (MMKSFLLVVNIVALTLPFLAA), serve as a signal peptide directing secretion. 3 repeat units span residues 127–153 (LGKA…QPTV), 154–179 (SAGD…EEAR), and 180–207 (ESPE…PRES). Positions 127 to 207 (LGKATILSTD…AVPSEEPRES (81 aa)) are 3 X 27 AA tandem repeats. The segment at 143 to 234 (QTPVSAAQPT…STGPAIASMA (92 aa)) is disordered. The O-linked (GalNAc...) threonine glycan is linked to Thr144. The span at 144–171 (TPVSAAQPTVSAGDTPEVSSQFIDTPDT) shows a compositional bias: polar residues. Phosphothreonine is present on Thr158. At Ser162 the chain carries Phosphoserine; alternate. The O-linked (GalNAc...) serine; alternate glycan is linked to Ser162.

The protein belongs to the kappa-casein family. Mammary gland specific. Secreted in milk.

Its subcellular location is the secreted. Its function is as follows. Kappa-casein stabilizes micelle formation, preventing casein precipitation in milk. The sequence is that of Kappa-casein (CSN3) from Cavia porcellus (Guinea pig).